Here is a 65-residue protein sequence, read N- to C-terminus: Photosystem II reaction center protein J (65 aa).

Basic and acidic residues predominate over residues 1–17 (MSTKLKGPDGRIPDRLP). Residues 1–20 (MSTKLKGPDGRIPDRLPDGT) form a disordered region. The helical transmembrane segment at 36–56 (LWLVATVGGMAVLSVLGLFFF) threads the bilayer.

The protein belongs to the PsbJ family. PSII is composed of 1 copy each of membrane proteins PsbA, PsbB, PsbC, PsbD, PsbE, PsbF, PsbH, PsbI, PsbJ, PsbK, PsbL, PsbM, PsbT, PsbX, PsbY, Psb30/Ycf12, peripheral proteins PsbO, CyanoQ (PsbQ), PsbU, PsbV and a large number of cofactors. It forms dimeric complexes.

It is found in the cellular thylakoid membrane. Functionally, one of the components of the core complex of photosystem II (PSII). PSII is a light-driven water:plastoquinone oxidoreductase that uses light energy to abstract electrons from H(2)O, generating O(2) and a proton gradient subsequently used for ATP formation. It consists of a core antenna complex that captures photons, and an electron transfer chain that converts photonic excitation into a charge separation. The polypeptide is Photosystem II reaction center protein J (Prochlorococcus marinus (strain MIT 9303)).